A 370-amino-acid chain; its full sequence is Probable protein phosphatase 2C 67 (370 aa).

In terms of domain architecture, PPM-type phosphatase spans 35-344 (TFGEFSMAMI…DDITVIVVYL (310 aa)). 4 residues coordinate Mn(2+): Asp77, Gly78, Asp276, and Asp335.

This sequence belongs to the PP2C family. Interacts with SAUR19. Interacts with AHA2 at the plasma membrane. Mg(2+) serves as cofactor. Mn(2+) is required as a cofactor.

It is found in the cell membrane. The catalysed reaction is O-phospho-L-seryl-[protein] + H2O = L-seryl-[protein] + phosphate. The enzyme catalyses O-phospho-L-threonyl-[protein] + H2O = L-threonyl-[protein] + phosphate. Its function is as follows. Dephosphorylates and represses plasma membrane H(+)-ATPases (PM H(+)-ATPases, e.g. AHA1 and AHA2), thus influencing negatively plant growth and fitness. Promotes the apical hook maintenance of etiolated seedlings. The polypeptide is Probable protein phosphatase 2C 67 (Arabidopsis thaliana (Mouse-ear cress)).